A 291-amino-acid chain; its full sequence is Endo-1,4-beta-xylanase 11B (291 aa).

A signal peptide spans 1-19; sequence MVAFSSLFLGASIAATALA. One can recognise a GH11 domain in the interval 34 to 222; that stretch reads TYTQSATGTH…SSGSARINVG (189 aa). N-linked (GlcNAc...) asparagine glycosylation occurs at Asn-93. The active-site Nucleophile is Glu-118. Residue Glu-209 is the Proton donor of the active site. Residues 223–246 are disordered; it reads GGSTGGGNNGGGNNGGNPGGNPGG. The CBM1 domain maps to 255–291; sequence NCSPRWGQCGGQGWNGPTCCESGTTCRQQNQWYSQCL.

It belongs to the glycosyl hydrolase 11 (cellulase G) family.

It is found in the secreted. It catalyses the reaction Endohydrolysis of (1-&gt;4)-beta-D-xylosidic linkages in xylans.. It participates in glycan degradation; xylan degradation. The activity iss completely inhibited by Hg(2+), a metal ion that interacts with Trp and oxidizes the indole ring, and is significantly enhanced by beta-mercaptoethanol, which counteracts the oxidation effects of the S-S linkage between Cys residues. Endo-1,4-beta-xylanase involved in the hydrolysis of xylan, a major structural heterogeneous polysaccharide found in plant biomass representing the second most abundant polysaccharide in the biosphere, after cellulose. Shows maximum activity on soluble wheat arabinoxylan (defined as 100%), moderate activity on birchwood xylan (80.5%) and beechwood xylan (76.2%), and weak activity on insoluble wheat arabinoxylan (7.0%). Has no activity towards glucan or carboxymethyl cellulose-sodium (CMC-Na). The chain is Endo-1,4-beta-xylanase 11B from Humicola insolens (Soft-rot fungus).